Consider the following 704-residue polypeptide: Glycogen [starch] synthase, liver (704 aa).

S8 bears the Phosphoserine; by AMPK and PKA mark. S11 carries the phosphoserine modification. UDP is bound at residue K40. 2 residues coordinate UDP-alpha-D-glucose: H205 and R211. The alpha-D-glucose 6-phosphate site is built by H291, E292, Q294, H297, and K301. R331 provides a ligand contact to UDP. UDP-alpha-D-glucose is bound at residue R331. H501 lines the alpha-D-glucose 6-phosphate pocket. UDP-alpha-D-glucose contacts are provided by E510, W512, and G513. Residue T515 participates in UDP binding. Alpha-D-glucose 6-phosphate is bound by residues R582 and R586. Residues 620 to 704 (KFHLEPTSPP…KKKLHGEYKN (85 aa)) are disordered. Position 627 is a phosphoserine (S627). Phosphoserine; by GSK3-alpha and GSK3-beta is present on residues S641, S645, S649, and S653. Residues 647-657 (SGSQASSPQCS) are compositionally biased toward low complexity. Position 657 is a phosphoserine; by CK2 (S657). Positions 658–675 (DAEDEEDEDERYDEEEEA) are enriched in acidic residues. At S684 the chain carries Phosphoserine.

It belongs to the glycosyltransferase 3 family. Part of the glycogen synthase (GS)-glycogenin complex, a heterooctamer composed of a tetramer of GS and 2 dimers of glycogenin, where each GS protomer binds to one glycogenin subunit (via glycogenin C-terminus); the GS tetramer may dissociate from glycogenin dimers to continue glycogen polymerization on its own. May also form a heterooctamer complex with GYG1 (via GYG1 C-terminus). In terms of processing, phosphorylation reduces the activity towards UDP-alpha-D-glucose. Primed phosphorylation at Ser-657 (site 5) by CSNK2A1 and CSNK2A2 is required for inhibitory phosphorylation at Ser-641 (site 3a), Ser-645 (site 3b), Ser-649 (site 3c) and Ser-653 (site 4) by GSK3A an GSK3B. Dephosphorylation at Ser-641 and Ser-645 by PP1 activates the enzyme. Phosphorylation at Ser-8 is not required for interaction with GYG1. Interaction with GYG1 does not regulate the phosphorylation at Ser-8 and Ser-641. Specifically expressed in liver.

It catalyses the reaction [(1-&gt;4)-alpha-D-glucosyl](n) + UDP-alpha-D-glucose = [(1-&gt;4)-alpha-D-glucosyl](n+1) + UDP + H(+). Its pathway is glycan biosynthesis; glycogen biosynthesis. Its activity is regulated as follows. Allosteric activation by glucose-6-phosphate. Phosphorylation reduces the activity towards UDP-glucose. When in the non-phosphorylated state, glycogen synthase does not require glucose-6-phosphate as an allosteric activator; when phosphorylated it does. Functionally, glycogen synthase participates in the glycogen biosynthetic process along with glycogenin and glycogen branching enzyme. Extends the primer composed of a few glucose units formed by glycogenin by adding new glucose units to it. In this context, glycogen synthase transfers the glycosyl residue from UDP-Glc to the non-reducing end of alpha-1,4-glucan. The polypeptide is Glycogen [starch] synthase, liver (Mus musculus (Mouse)).